The sequence spans 118 residues: Small ribosomal subunit protein mS37 (118 aa).

The 43-residue stretch at 42-84 folds into the CHCH domain; that stretch reads EATCITEMSMMMACWKQNEFRDEACRKEIQDFFDCSSRAQEAR. Short sequence motifs (cx9C motif) lie at residues 45 to 55 and 66 to 76; these read CITEMSMMMAC and CRKEIQDFFDC. Intrachain disulfides connect C45–C76 and C55–C66. The disordered stretch occupies residues 86–105; the sequence is MRSIQESLGQSESLSPHKMT. The segment covering 89–99 has biased composition (polar residues); that stretch reads IQESLGQSESL.

This sequence belongs to the mitochondrion-specific ribosomal protein mS37 family. As to quaternary structure, component of the mitochondrial ribosome small subunit (28S) which comprises a 12S rRNA and about 30 distinct proteins.

It is found in the mitochondrion. The protein resides in the nucleus. The protein is Small ribosomal subunit protein mS37 (Chchd1) of Mus musculus (Mouse).